The following is a 113-amino-acid chain: Prostate and testis expressed protein 2 (113 aa).

A signal peptide spans Met1–Ala26. One can recognise a UPAR/Ly6 domain in the interval Ile29 to Pro110. 4 cysteine pairs are disulfide-bonded: Cys31/Cys57, Cys34/Cys42, Cys49/Cys80, and Cys84/Cys101.

Belongs to the PATE family. Isoform 1 and isoform 2 are expressed in prostate and testis. Isoform 2 is expressed in male and female brain at equivalent levels, in particular in cerebellum, cerebral cortex, corpus callosum, occipital, parrietal and temporal lobes, and pons, but not in amygdala, cerebral peduncle, hippocampus and thalamus.

The protein resides in the secreted. This Homo sapiens (Human) protein is Prostate and testis expressed protein 2 (PATE2).